A 518-amino-acid polypeptide reads, in one-letter code: Voltage-gated potassium channel regulatory subunit KCNG2 (518 aa).

Residues Met-1–Ile-214 are Cytoplasmic-facing. The chain crosses the membrane as a helical span at residues Pro-215–Ile-236. Topologically, residues Ser-237–Asp-257 are extracellular. A helical membrane pass occupies residues Ile-258–Gln-279. Residues Ala-280–Pro-290 lie on the Cytoplasmic side of the membrane. The chain crosses the membrane as a helical span at residues Leu-291–Ala-311. Residues Ser-312–Val-331 lie on the Extracellular side of the membrane. A helical; Voltage-sensor membrane pass occupies residues Gly-332–His-352. The Cytoplasmic segment spans residues Ser-353 to Thr-367. A helical membrane pass occupies residues Arg-368–Tyr-389. At Leu-390–Ile-404 the chain is on the extracellular side. Residues Pro-405 to Thr-416 constitute an intramembrane region (helical). A Selectivity filter motif is present at residues Thr-417 to Asp-422. Residues Thr-417 to Val-424 lie within the membrane without spanning it. Residues Pro-425 to Gln-431 are Extracellular-facing. The helical transmembrane segment at Val-432–Tyr-460 threads the bilayer. The Cytoplasmic segment spans residues Ser-461–Cys-518. The interval Arg-473–Cys-518 is disordered. Positions Ala-501–Cys-518 are enriched in basic and acidic residues.

The protein belongs to the potassium channel family. G (TC 1.A.1.2) subfamily. Kv6.2/KCNG2 sub-subfamily. In terms of assembly, heterodimer with KCNB1.

Its subcellular location is the cell membrane. Regulatory alpha-subunit of the voltage-gated potassium (Kv) channel which, when coassembled with KCNB1, can modulate the kinetics and conductance-voltage relationship. Modulates channel activity by shifting the threshold and the half-maximal activation to more negative values. Potassium channel subunit that does not form functional channels by itself. The sequence is that of Voltage-gated potassium channel regulatory subunit KCNG2 from Gallus gallus (Chicken).